Reading from the N-terminus, the 180-residue chain is Endoribonuclease YbeY (180 aa).

3 residues coordinate Zn(2+): His-149, His-153, and His-159.

It belongs to the endoribonuclease YbeY family. The cofactor is Zn(2+).

The protein resides in the cytoplasm. Single strand-specific metallo-endoribonuclease involved in late-stage 70S ribosome quality control and in maturation of the 3' terminus of the 16S rRNA. This Prochlorococcus marinus subsp. pastoris (strain CCMP1986 / NIES-2087 / MED4) protein is Endoribonuclease YbeY.